A 156-amino-acid chain; its full sequence is Probable cyclic pyranopterin monophosphate synthase (156 aa).

Substrate-binding positions include 74–76 (MCH) and 110–111 (ME). The active site involves Asp125.

It belongs to the MoaC family. As to quaternary structure, homohexamer; trimer of dimers.

It catalyses the reaction (8S)-3',8-cyclo-7,8-dihydroguanosine 5'-triphosphate = cyclic pyranopterin phosphate + diphosphate. Its pathway is cofactor biosynthesis; molybdopterin biosynthesis. In terms of biological role, catalyzes the conversion of (8S)-3',8-cyclo-7,8-dihydroguanosine 5'-triphosphate to cyclic pyranopterin monophosphate (cPMP). The chain is Probable cyclic pyranopterin monophosphate synthase from Methanospirillum hungatei JF-1 (strain ATCC 27890 / DSM 864 / NBRC 100397 / JF-1).